The primary structure comprises 108 residues: Translation initiation factor 1A (108 aa).

An S1-like domain is found at 11–85 (SVKEVPKPAE…NKCDIIYKYS (75 aa)).

Belongs to the eIF-1A family.

Its function is as follows. Seems to be required for maximal rate of protein biosynthesis. Enhances ribosome dissociation into subunits and stabilizes the binding of the initiator Met-tRNA(I) to 40 S ribosomal subunits. This Sulfurisphaera tokodaii (strain DSM 16993 / JCM 10545 / NBRC 100140 / 7) (Sulfolobus tokodaii) protein is Translation initiation factor 1A (eIF1A).